The chain runs to 218 residues: Octanoyltransferase (218 aa).

Residues 32–218 (GEAAEAIWLL…LRTFPQHFPD (187 aa)) enclose the BPL/LPL catalytic domain. Residues 71–78 (RGGQYTYH), 151–153 (AIG), and 164–166 (GLS) each bind substrate. Catalysis depends on Cys-182, which acts as the Acyl-thioester intermediate.

The protein belongs to the LipB family.

Its subcellular location is the cytoplasm. It catalyses the reaction octanoyl-[ACP] + L-lysyl-[protein] = N(6)-octanoyl-L-lysyl-[protein] + holo-[ACP] + H(+). It participates in protein modification; protein lipoylation via endogenous pathway; protein N(6)-(lipoyl)lysine from octanoyl-[acyl-carrier-protein]: step 1/2. In terms of biological role, catalyzes the transfer of endogenously produced octanoic acid from octanoyl-acyl-carrier-protein onto the lipoyl domains of lipoate-dependent enzymes. Lipoyl-ACP can also act as a substrate although octanoyl-ACP is likely to be the physiological substrate. In Cereibacter sphaeroides (strain ATCC 17029 / ATH 2.4.9) (Rhodobacter sphaeroides), this protein is Octanoyltransferase.